Here is a 378-residue protein sequence, read N- to C-terminus: Putative glutamate--cysteine ligase 2 (378 aa).

This sequence belongs to the glutamate--cysteine ligase type 2 family. YbdK subfamily.

The enzyme catalyses L-cysteine + L-glutamate + ATP = gamma-L-glutamyl-L-cysteine + ADP + phosphate + H(+). ATP-dependent carboxylate-amine ligase which exhibits weak glutamate--cysteine ligase activity. This chain is Putative glutamate--cysteine ligase 2, found in Jannaschia sp. (strain CCS1).